The chain runs to 237 residues: Proteasome subunit beta (237 aa).

A disordered region spans residues 1-27 (MSKFPDLPGMKNLDANPYEPELASFDD). Residues 1–42 (MSKFPDLPGMKNLDANPYEPELASFDDMDADAGDGDAVAKTG) constitute a propeptide, removed in mature form; by autocatalysis. Thr43 serves as the catalytic Nucleophile.

Belongs to the peptidase T1B family. The 20S proteasome core is composed of 14 alpha and 14 beta subunits that assemble into four stacked heptameric rings, resulting in a barrel-shaped structure. The two inner rings, each composed of seven catalytic beta subunits, are sandwiched by two outer rings, each composed of seven alpha subunits. The catalytic chamber with the active sites is on the inside of the barrel. Has a gated structure, the ends of the cylinder being occluded by the N-termini of the alpha-subunits. Is capped at one or both ends by the proteasome regulatory ATPase, PAN.

The protein localises to the cytoplasm. It carries out the reaction Cleavage of peptide bonds with very broad specificity.. With respect to regulation, the formation of the proteasomal ATPase PAN-20S proteasome complex, via the docking of the C-termini of PAN into the intersubunit pockets in the alpha-rings, triggers opening of the gate for substrate entry. Interconversion between the open-gate and close-gate conformations leads to a dynamic regulation of the 20S proteasome proteolysis activity. Component of the proteasome core, a large protease complex with broad specificity involved in protein degradation. The sequence is that of Proteasome subunit beta from Halomicrobium mukohataei (strain ATCC 700874 / DSM 12286 / JCM 9738 / NCIMB 13541) (Haloarcula mukohataei).